Consider the following 229-residue polypeptide: Large ribosomal subunit protein uL1 (229 aa).

The protein belongs to the universal ribosomal protein uL1 family. In terms of assembly, part of the 50S ribosomal subunit.

Binds directly to 23S rRNA. The L1 stalk is quite mobile in the ribosome, and is involved in E site tRNA release. Functionally, protein L1 is also a translational repressor protein, it controls the translation of the L11 operon by binding to its mRNA. This Streptococcus pneumoniae (strain JJA) protein is Large ribosomal subunit protein uL1.